The sequence spans 383 residues: S-adenosylmethionine synthase (383 aa).

His15 is an ATP binding site. Residue Asp17 participates in Mg(2+) binding. Position 43 (Glu43) interacts with K(+). L-methionine contacts are provided by Glu56 and Gln99. The interval Gln99–Arg109 is flexible loop. ATP contacts are provided by residues Asp164–Lys166, Arg230–Phe231, Asp239, Arg245–Lys246, Ala262, and Lys266. Residue Asp239 participates in L-methionine binding. Lys270 contacts L-methionine.

This sequence belongs to the AdoMet synthase family. Homotetramer; dimer of dimers. The cofactor is Mg(2+). Requires K(+) as cofactor.

The protein localises to the cytoplasm. The enzyme catalyses L-methionine + ATP + H2O = S-adenosyl-L-methionine + phosphate + diphosphate. The protein operates within amino-acid biosynthesis; S-adenosyl-L-methionine biosynthesis; S-adenosyl-L-methionine from L-methionine: step 1/1. Catalyzes the formation of S-adenosylmethionine (AdoMet) from methionine and ATP. The overall synthetic reaction is composed of two sequential steps, AdoMet formation and the subsequent tripolyphosphate hydrolysis which occurs prior to release of AdoMet from the enzyme. In Shewanella loihica (strain ATCC BAA-1088 / PV-4), this protein is S-adenosylmethionine synthase.